Here is a 258-residue protein sequence, read N- to C-terminus: UPF0246 protein Asuc_0575 (258 aa).

The protein belongs to the UPF0246 family.

The protein is UPF0246 protein Asuc_0575 of Actinobacillus succinogenes (strain ATCC 55618 / DSM 22257 / CCUG 43843 / 130Z).